Consider the following 808-residue polypeptide: Enhancer of polycomb homolog 2 (808 aa).

Residues K135, K195, and K324 each participate in a glycyl lysine isopeptide (Lys-Gly) (interchain with G-Cter in SUMO2) cross-link. The segment at 337–357 (YPKKPKAEAGIAPQQPTPETL) is disordered. Residue K362 forms a Glycyl lysine isopeptide (Lys-Gly) (interchain with G-Cter in SUMO2) linkage. Disordered stretches follow at residues 371-397 (QSSD…PDGS), 595-630 (QRQQ…CMSK), and 645-682 (VSAP…LYST). Positions 595-614 (QRQQLAQLHQKQQSQHSSQQ) are enriched in low complexity. Polar residues-rich tracts occupy residues 615–630 (THPK…CMSK) and 658–682 (EQNT…LYST). The residue at position 755 (S755) is a Phosphoserine.

Belongs to the enhancer of polycomb family.

Its subcellular location is the nucleus. Its function is as follows. May play a role in transcription or DNA repair. The polypeptide is Enhancer of polycomb homolog 2 (Epc2) (Mus musculus (Mouse)).